Reading from the N-terminus, the 1453-residue chain is Collagen alpha-1(I) chain (1453 aa).

An N-terminal signal peptide occupies residues 1 to 22 (MFSFVDSRLLLLIAATVLLTRG). A propeptide spans 23–151 (EGEEDIQTGS…PPGLGGNFAP (129 aa)) (N-terminal propeptide). One can recognise a VWFC domain in the interval 31-89 (GSCVQDGLTYNDKDVWKPEPCQICVCDSGNILCDEVICEDTSDCPNAEIPFGECCPICP). Residues 98-1203 (PESAGVEGPK…PQEKAHDGGR (1106 aa)) form a disordered region. Residues 106 to 116 (PKGDTGPRGDR) show a composition bias toward basic and acidic residues. Pro residues predominate over residues 131–143 (PGLPGPPGPPGPP). Position 152 is a pyrrolidone carboxylic acid (Q152). An Allysine modification is found at K160. The span at 162–176 (AGVAVPGPMGPAGPR) shows a compositional bias: low complexity. 4-hydroxyproline occurs at positions 179, 182, 185, 194, 197, 200, 215, 230, 236, 245, and 251. A compositionally biased stretch (low complexity) spans 187-206 (PQGFQGPPGEPGEPGASGPM). Residue K254 is modified to 5-hydroxylysine; alternate. The O-linked (Gal...) hydroxylysine; partial glycan is linked to K254. Over residues 265-284 (AKGQPGPAGPKGEPGSPGEN) the composition is skewed to low complexity. A 4-hydroxyproline mark is found at P269, P278, P281, P287, P296, P302, P317, P323, P332, and P335. The segment covering 307 to 319 (PAGARGNDGAPGA) has biased composition (low complexity). The span at 320–334 (AGPPGPTGPAGPPGF) shows a compositional bias: pro residues. Residues 350–361 (RGSEGPQGSRGE) are compositionally biased toward low complexity. P362, P365, P377, P383, P392, P398, P401, and P416 each carry 4-hydroxyproline. A compositionally biased stretch (low complexity) spans 368 to 418 (AGAAGPAGNPGADGQPGAKGATGAPGIAGAPGFPGARGPSGPQGPSGAPGP). Residue K419 is modified to 5-hydroxylysine. Residues P425, P428, P440, P449, P464, P470, P479, and P485 each carry the 4-hydroxyproline modification. A compositionally biased stretch (low complexity) spans 463–482 (EPGPAGLPGPAGERGAPGSR). Residue K494 is modified to 5-hydroxylysine. Residues P497, P503, P512, P518, P524, P533, P536, P545, P554, P560, P572, P581, P584, P590, P593, P611, P629, P635, P641, P647, P653, P659, P671, P680, P692, P704, P707, P713, P719, P728, and P737 each carry the 4-hydroxyproline modification. Residues 527-581 (KGLTGSPGSPGPDGKTGPPGPAGQDGRPGPAGPPGARGQAGVMGFPGPKGAAGEP) show a composition bias toward low complexity. The span at 623-664 (QGPAGAPGFQGLPGPAGPPGEAGKPGEQGVPGNAGAPGPAGA) shows a compositional bias: low complexity. Positions 685-722 (PRGANGAPGNDGAKGDAGAPGAPGNEGPPGLEGMPGER) are enriched in low complexity. Position 740 is a 5-hydroxylysine (K740). 4-hydroxyproline occurs at positions 746, 761, 767, 776, 788, 794, 797, 806, 812, 830, 839, and 848. Residues 800-827 (AGFAGPPGADGQPGAKGETGDAGAKGDA) show a composition bias toward low complexity. Low complexity predominate over residues 835-883 (PTGAPGPAGZVGAPGPKGARGSAGPPGATGFPGAAGRVGPPGPSGNIGL). K851 is modified (5-hydroxylysine). 4-hydroxyproline is present on residues P860 and P866. Residue P874 is modified to 3-hydroxyproline. A 4-hydroxyproline mark is found at P875, P884, P887, P908, P911, P917, P920, P926, P935, P953, P962, P965, P971, P986, P992, P998, P1007, and P1013. Residues 890–908 (AGKZGSKGPRGETGPAGRP) are compositionally biased toward low complexity. Over residues 910 to 920 (EPGPAGPPGPP) the composition is skewed to pro residues. A compositionally biased stretch (pro residues) spans 985 to 995 (PPGPMGPPGLA). Positions 997 to 1021 (PPGEAGREGAPGAEGAPGRDGAAGP) are enriched in low complexity. 5-hydroxylysine; partial is present on K1022. A compositionally biased stretch (pro residues) spans 1031–1046 (AGPPGAPGAPGAPGPV). 4-hydroxyproline is present on residues P1034, P1037, P1040, and P1067. Over residues 1070–1081 (AGARGPAGPQGP) the composition is skewed to low complexity. Positions 1082 to 1096 (RGDKGETGEQGDRGM) are enriched in basic and acidic residues. The residue at position 1085 (K1085) is a 5-hydroxylysine; partial. Residue K1097 is modified to 5-hydroxylysine; alternate. K1097 carries O-linked (Gal...) hydroxylysine; partial glycosylation. 4-hydroxyproline is present on residues P1109, P1112, P1115, P1133, and P1148. Residues 1115 to 1139 (PGEQGPSGASGPAGPRGPPGSAGAA) show a composition bias toward low complexity. The residue at position 1153 (P1153) is a 3-hydroxyproline. P1154 carries the post-translational modification 4-hydroxyproline. A compositionally biased stretch (pro residues) spans 1166–1181 (VGPPGPPGPPGPPGPP). A 3-hydroxyproline modification is found at P1168. The residue at position 1169 (P1169) is a 4-hydroxyproline. P1171 is modified (3-hydroxyproline). A 4-hydroxyproline modification is found at P1172. P1174 carries the post-translational modification 3-hydroxyproline. Residues P1175, P1178, and P1181 each carry the 4-hydroxyproline modification. Residue K1197 is modified to Allysine. A propeptide spans 1208–1453 (DDANVMRDRD…GIDIGPVCFL (246 aa)) (C-terminal propeptide). One can recognise a Fibrillar collagen NC1 domain in the interval 1218-1453 (LEVDTTLKSL…GIDIGPVCFL (236 aa)). 3 disulfides stabilise this stretch: C1248–C1280, C1288–C1451, and C1359–C1404. D1266, N1268, Q1269, C1271, and D1274 together coordinate Ca(2+). N1354 is a glycosylation site (N-linked (GlcNAc...) asparagine).

The protein belongs to the fibrillar collagen family. Trimers of one alpha 2(I) and two alpha 1(I) chains. Contains mostly 4-hydroxyproline. Proline residues at the third position of the tripeptide repeating unit (G-X-Y) are 4-hydroxylated in some or all of the chains. Post-translationally, contains 3-hydroxyproline. This modification occurs on the first proline residue in the sequence motif Gly-Pro-Hyp, where Hyp is 4-hydroxyproline. In terms of processing, lysine residues at the third position of the tripeptide repeating unit (G-X-Y) are 5-hydroxylated in some or all of the chains. O-glycosylated on hydroxylated lysine residues. The O-linked glycan consists of a Glc-Gal disaccharide. As to expression, forms the fibrils of tendon, ligaments and bones. In bones the fibrils are mineralized with calcium hydroxyapatite.

Its subcellular location is the secreted. It is found in the extracellular space. The protein localises to the extracellular matrix. In terms of biological role, type I collagen is a member of group I collagen (fibrillar forming collagen). The protein is Collagen alpha-1(I) chain (COL1A1) of Gallus gallus (Chicken).